A 419-amino-acid chain; its full sequence is Probable 3-isopropylmalate dehydratase large subunit (419 aa).

3 residues coordinate [4Fe-4S] cluster: C299, C359, and C362.

This sequence belongs to the aconitase/IPM isomerase family. LeuC type 2 subfamily. As to quaternary structure, heterodimer of LeuC and LeuD. Requires [4Fe-4S] cluster as cofactor.

The enzyme catalyses (2R,3S)-3-isopropylmalate = (2S)-2-isopropylmalate. The protein operates within amino-acid biosynthesis; L-leucine biosynthesis; L-leucine from 3-methyl-2-oxobutanoate: step 2/4. Catalyzes the isomerization between 2-isopropylmalate and 3-isopropylmalate, via the formation of 2-isopropylmaleate. This is Probable 3-isopropylmalate dehydratase large subunit from Methanothermobacter thermautotrophicus (strain ATCC 29096 / DSM 1053 / JCM 10044 / NBRC 100330 / Delta H) (Methanobacterium thermoautotrophicum).